The chain runs to 340 residues: Protein-arginine kinase (340 aa).

The region spanning 21-242 (VVLSSRIRLA…EQIIMQERVA (222 aa)) is the Phosphagen kinase C-terminal domain. ATP-binding positions include 24–28 (SSRIR), H79, R113, 164–168 (RASVM), and 195–200 (RGIYGE).

The protein belongs to the ATP:guanido phosphotransferase family.

The enzyme catalyses L-arginyl-[protein] + ATP = N(omega)-phospho-L-arginyl-[protein] + ADP + H(+). Its function is as follows. Catalyzes the specific phosphorylation of arginine residues in proteins. The chain is Protein-arginine kinase from Listeria welshimeri serovar 6b (strain ATCC 35897 / DSM 20650 / CCUG 15529 / CIP 8149 / NCTC 11857 / SLCC 5334 / V8).